The sequence spans 341 residues: HTH-type transcriptional repressor PurR (341 aa).

The HTH lacI-type domain occupies Ala-2–Val-56. A DNA-binding region (H-T-H motif) is located at residues Ile-4 to Asn-23. A DNA-binding region spans residues Ser-48–Val-56. Hypoxanthine is bound by residues Tyr-73, Arg-190, Thr-192, and Asp-275.

As to quaternary structure, homodimer.

It participates in purine metabolism; purine nucleotide biosynthesis [regulation]. Is the main repressor of the genes involved in the de novo synthesis of purine nucleotides, regulating purB, purC, purEK, purF, purHD, purL, purMN and guaBA expression. PurR is allosterically activated to bind its cognate DNA by binding the purine corepressors, hypoxanthine or guanine, thereby effecting transcription repression. The chain is HTH-type transcriptional repressor PurR from Yersinia pestis bv. Antiqua (strain Antiqua).